Reading from the N-terminus, the 61-residue chain is Large ribosomal subunit protein bL32 (61 aa).

The span at 1-16 shows a compositional bias: basic residues; the sequence is MAVPRRKTSPSRRGMR. Residues 1–61 form a disordered region; the sequence is MAVPRRKTSP…RQVLKAKSDS (61 aa). Basic and acidic residues predominate over residues 27-44; it reads YAEDKDSGELRRPHHLDL.

Belongs to the bacterial ribosomal protein bL32 family.

This Nitrobacter winogradskyi (strain ATCC 25391 / DSM 10237 / CIP 104748 / NCIMB 11846 / Nb-255) protein is Large ribosomal subunit protein bL32.